Here is a 921-residue protein sequence, read N- to C-terminus: Sodium/calcium exchanger 2 (921 aa).

The signal sequence occupies residues 1 to 20 (MAPLALVGVTLLLAAPPCSG). The Extracellular portion of the chain corresponds to 21-68 (AATPTPSLPPPPANDSDTSTGGCQGSYRCQPGVLLPVWEPDDPSLGDK). Residues 22–42 (ATPTPSLPPPPANDSDTSTGG) form a disordered region. An N-linked (GlcNAc...) asparagine glycan is attached at asparagine 34. A helical transmembrane segment spans residues 69–90 (AARAVVYFVAMVYMFLGVSIIA). Over 91 to 130 (DRFMAAIEVITSKEKEITITKANGETSVGTVRIWNETVSN) the chain is Cytoplasmic. Residues 131-152 (LTLMALGSSAPEILLSVIEVCG) traverse the membrane as a helical segment. One copy of the Alpha-1 repeat lies at 135 to 175 (ALGSSAPEILLSVIEVCGHNFQAGELGPGTIVGSAAFNMFV). Residues 153-164 (HNFQAGELGPGT) are Extracellular-facing. The chain crosses the membrane as a helical span at residues 165–185 (IVGSAAFNMFVVIAVCIYVIP). At 186-196 (AGESRKIKHLR) the chain is on the cytoplasmic side. Residues 197-219 (VFFVTASWSIFAYVWLYLILAVF) traverse the membrane as a helical segment. Over 220-222 (SPG) the chain is Extracellular. Residues 223–246 (VVQVWEALLTLVFFPVCVVFAWMA) form a helical membrane-spanning segment. The Cytoplasmic portion of the chain corresponds to 247 to 720 (DKRLLFYKYV…DGSREERLPS (474 aa)). A putative calmodulin-binding region region spans residues 248–267 (KRLLFYKYVYKRYRTDPRSG). Calx-beta domains are found at residues 384–483 (GAGE…VRLL) and 512–612 (ATVT…IELG). Ca(2+) contacts are provided by glutamate 407, aspartate 443, aspartate 468, aspartate 469, isoleucine 471, glutamate 473, glutamate 476, aspartate 518, aspartate 519, aspartate 520, glutamate 536, aspartate 598, glutamate 599, and glutamate 600. Serine 622 is subject to Phosphoserine. Residue glutamate 665 coordinates Ca(2+). Residues 721-740 (CFDYVMHFLTVFWKVLFACV) form a helical membrane-spanning segment. The Extracellular portion of the chain corresponds to 741–747 (PPTEYCH). A helical membrane pass occupies residues 748–770 (GWACFGVSILVIGLLTALIGDLA). At 771–772 (SH) the chain is on the cytoplasmic side. A helical membrane pass occupies residues 773 to 791 (FGCTVGLKDSVNAVVFVAL). One copy of the Alpha-2 repeat lies at 790 to 826 (ALGTSIPDTFASKVAALQDQCADASIGNVTGSNAVNV). Topologically, residues 792–822 (GTSIPDTFASKVAALQDQCADASIGNVTGSN) are extracellular. Asparagine 817 carries N-linked (GlcNAc...) asparagine glycosylation. The helical transmembrane segment at 823–843 (AVNVFLGLGVAWSVAAVYWAV) threads the bilayer. The Cytoplasmic portion of the chain corresponds to 844–854 (QGRPFEVRTGT). Residues 855-875 (LAFSVTLFTVFAFVGIAVLLY) traverse the membrane as a helical segment. The Extracellular segment spans residues 876 to 892 (RRRPHIGGELGGPRGPK). Residues 893–909 (LATTALFLGLWLLYILF) form a helical membrane-spanning segment. The Cytoplasmic portion of the chain corresponds to 910-921 (ASLEAYCHIRGF).

The protein belongs to the Ca(2+):cation antiporter (CaCA) (TC 2.A.19) family. SLC8 subfamily.

The protein resides in the cell membrane. Its subcellular location is the basolateral cell membrane. The protein localises to the perikaryon. It localises to the cell projection. It is found in the dendrite. The protein resides in the dendritic spine. The catalysed reaction is Ca(2+)(in) + 3 Na(+)(out) = Ca(2+)(out) + 3 Na(+)(in). With respect to regulation, calcium transport is down-regulated by Na(+) and stimulated by Ca(2+). Functionally, mediates the electrogenic exchange of Ca(2+) against Na(+) ions across the cell membrane, and thereby contributes to the regulation of cytoplasmic Ca(2+) levels and Ca(2+)-dependent cellular processes. Contributes to cellular Ca(2+) homeostasis in excitable cells. Contributes to the rapid decrease of cytoplasmic Ca(2+) levels back to baseline after neuronal activation, and thereby contributes to modulate synaptic plasticity, learning and memory. Plays a role in regulating urinary Ca(2+) and Na(+) excretion. This chain is Sodium/calcium exchanger 2 (SLC8A2), found in Homo sapiens (Human).